Here is a 236-residue protein sequence, read N- to C-terminus: Diaminopimelate epimerase (236 aa).

Substrate is bound by residues Asn8 and Asn55. Catalysis depends on Cys64, which acts as the Proton donor. Residues 65 to 66 (GN), Asn159, and 176 to 177 (ER) contribute to the substrate site. Cys186 serves as the catalytic Proton acceptor. 187–188 (GT) serves as a coordination point for substrate.

The protein belongs to the diaminopimelate epimerase family. In terms of assembly, probably forms homotrimers.

The protein localises to the cytoplasm. The enzyme catalyses (2S,6S)-2,6-diaminopimelate = meso-2,6-diaminopimelate. Its pathway is amino-acid biosynthesis; L-lysine biosynthesis via DAP pathway; DL-2,6-diaminopimelate from LL-2,6-diaminopimelate: step 1/1. Catalyzes the stereoinversion of LL-2,6-diaminopimelate (L,L-DAP) to meso-diaminopimelate (meso-DAP), a precursor of L-lysine and an essential component of the bacterial peptidoglycan. Also catalyzes the racemization of certain amino acids, including Lys, with low efficiency. The sequence is that of Diaminopimelate epimerase from Thermotoga maritima (strain ATCC 43589 / DSM 3109 / JCM 10099 / NBRC 100826 / MSB8).